The chain runs to 212 residues: Peptide methionine sulfoxide reductase MsrA (212 aa).

Cys52 is a catalytic residue.

The protein belongs to the MsrA Met sulfoxide reductase family.

It catalyses the reaction L-methionyl-[protein] + [thioredoxin]-disulfide + H2O = L-methionyl-(S)-S-oxide-[protein] + [thioredoxin]-dithiol. It carries out the reaction [thioredoxin]-disulfide + L-methionine + H2O = L-methionine (S)-S-oxide + [thioredoxin]-dithiol. In terms of biological role, has an important function as a repair enzyme for proteins that have been inactivated by oxidation. Catalyzes the reversible oxidation-reduction of methionine sulfoxide in proteins to methionine. This chain is Peptide methionine sulfoxide reductase MsrA, found in Salmonella paratyphi A (strain AKU_12601).